Reading from the N-terminus, the 180-residue chain is Adenine phosphoribosyltransferase (180 aa).

N-acetylserine is present on Ser-2. Residues Ser-15 and Ser-30 each carry the phosphoserine modification. Tyr-60 carries the post-translational modification Phosphotyrosine. Ser-66 carries the post-translational modification Phosphoserine. An N6-acetyllysine modification is found at Lys-114. A Phosphothreonine modification is found at Thr-135.

It belongs to the purine/pyrimidine phosphoribosyltransferase family. Homodimer.

The protein resides in the cytoplasm. The enzyme catalyses AMP + diphosphate = 5-phospho-alpha-D-ribose 1-diphosphate + adenine. It functions in the pathway purine metabolism; AMP biosynthesis via salvage pathway; AMP from adenine: step 1/1. Functionally, catalyzes a salvage reaction resulting in the formation of AMP, that is energically less costly than de novo synthesis. The protein is Adenine phosphoribosyltransferase of Stochomys longicaudatus (Target rat).